The chain runs to 567 residues: Glutathione/L-cysteine transport system ATP-binding/permease protein CydC (567 aa).

6 helical membrane passes run 14-34 (ILTL…MQAE), 44-64 (FNGK…IAFI), 130-150 (FLPK…YVFF), 156-176 (AIIL…LGLV), 240-260 (SFAL…FLGL), and 266-286 (DILL…FLPV). The ABC transmembrane type-1 domain maps to 17–298 (LITCLTLIQT…VGNDYHATLN (282 aa)). Positions 321–561 (LQLEAWSDQD…NGVYTKLVKA (241 aa)) constitute an ABC transporter domain. Position 360–367 (360–367 (GASGAGKS)) interacts with ATP.

It belongs to the ABC transporter superfamily. Cysteine exporter (TC 3.A.1.129.1) family. In terms of assembly, forms a heterodimer with CydD.

The protein localises to the cell membrane. It carries out the reaction L-cysteine(in) + ATP + H2O = L-cysteine(out) + ADP + phosphate + H(+). The catalysed reaction is glutathione(in) + ATP + H2O = glutathione(out) + ADP + phosphate + H(+). Functionally, part of the ABC transporter complex CydDC that exports the reduced low-molecular-weight thiols cysteine and glutathione from the cell. Export of these thiol-containing redox-active molecules may be crucial for redox homeostasis, permitting correct assembly of various respiratory complexes and formation of correct disulfide bonds in secreted proteins. CydC contains transmembrane domains (TMD), which form a pore in the membrane, and an ATP-binding domain (NBD), which is responsible for energy generation. This Bacillus subtilis (strain 168) protein is Glutathione/L-cysteine transport system ATP-binding/permease protein CydC (cydC).